Here is a 219-residue protein sequence, read N- to C-terminus: ER lumen protein-retaining receptor (219 aa).

The Lumenal portion of the chain corresponds to 1 to 5 (MNPFR). The helical transmembrane segment at 6 to 26 (ILGDLSHLTSILILIHNIKTT) threads the bilayer. Topologically, residues 27–37 (RYIEGISFKTQ) are cytoplasmic. Helical transmembrane passes span 38–58 (TLYALVFITRYLDLLTFHWVS) and 59–79 (LYNALMKIFFIVSTAYIVVLL). The Cytoplasmic portion of the chain corresponds to 80 to 98 (QGSKRTNTIAYNEMLMHDT). A helical membrane pass occupies residues 99–116 (FKIQHLLIGSALMSVFFH). At 117–118 (HK) the chain is on the lumenal side. Residues 119–139 (FTFLELAWSFSVWLESVAILP) form a helical membrane-spanning segment. Residues 140 to 152 (QLYMLSKGGKTRS) lie on the Cytoplasmic side of the membrane. A helical membrane pass occupies residues 153-173 (LTVHYIFAMGLYRALYIPNWI). The Lumenal segment spans residues 174-185 (WRYSTEDKKLDK). The chain crosses the membrane as a helical span at residues 186–206 (IAFFAGLLQTLLYSDFFYIYY). Residues 207-219 (TKVIRGKGFKLPK) are Cytoplasmic-facing.

This sequence belongs to the ERD2 family.

It localises to the endoplasmic reticulum membrane. Functionally, required for the retention of luminal endoplasmic reticulum proteins. Determines the specificity of the luminal ER protein retention system. Also required for normal vesicular traffic through the Golgi. This receptor strongly recognizes H-D-E-L and weakly recognizes D-D-E-L and K-D-E-L. In Saccharomyces cerevisiae (strain ATCC 204508 / S288c) (Baker's yeast), this protein is ER lumen protein-retaining receptor.